A 269-amino-acid polypeptide reads, in one-letter code: uncharacterized protein (269 aa).

Residues 52–262 adopt a coiled-coil conformation; that stretch reads KNVYEQLVAT…RKILVESINK (211 aa).

This is an uncharacterized protein from Caenorhabditis elegans.